The sequence spans 731 residues: Pre-B-cell leukemia transcription factor-interacting protein 1 (731 aa).

Residues 1–10 (MASCPDSDNS) show a composition bias toward polar residues. The disordered stretch occupies residues 1–155 (MASCPDSDNS…SSSDDDTDVD (155 aa)). Residue S43 is modified to Phosphoserine. 2 stretches are compositionally biased toward polar residues: residues 62-75 (LFQT…SILT) and 121-132 (LEGQSPPQSLPS). Phosphoserine is present on residues S129, S146, S147, and S148. T152 is subject to Phosphothreonine. Residues 270–348 (LLLDKLAKEN…QGLEADCVRG (79 aa)) adopt a coiled-coil conformation. Disordered stretches follow at residues 354-377 (LSGG…QEPE), 447-572 (GQDP…DPLP), and 698-731 (LKKR…HHRG). Over residues 364–375 (KAIREQGPREQE) the composition is skewed to basic and acidic residues. Positions 377-417 (ELSFLKQKEQLEAEAQALRQELERQRRLLGSVQQDLERSLQ) form a coiled coil. Composition is skewed to basic and acidic residues over residues 472 to 499 (WSGK…ESGR), 508 to 543 (QEDR…EPPR), and 551 to 569 (SGEK…DSHD). A Nuclear localization signal motif is present at residues 485-505 (RKAEHWKHKKEESGRERKKNW). S567 carries the phosphoserine modification. Positions 695-720 (DKALKKRSGKKDKHSQSPRAAGPREG) match the Nuclear localization signal motif. Over residues 698 to 707 (LKKRSGKKDK) the composition is skewed to basic residues.

Interacts with TEX11. Interacts with ESR1, PBX1, PBX2 and PBX3. Expressed in early hematopoietic precursors.

It is found in the cytoplasm. The protein resides in the cytoskeleton. The protein localises to the nucleus. Regulator of pre-B-cell leukemia transcription factors (BPXs) function. Inhibits the binding of PBX1-HOX complex to DNA and blocks the transcriptional activity of E2A-PBX1. Tethers estrogen receptor-alpha (ESR1) to microtubules and allows them to influence estrogen receptors-alpha signaling. This chain is Pre-B-cell leukemia transcription factor-interacting protein 1 (PBXIP1), found in Homo sapiens (Human).